Reading from the N-terminus, the 152-residue chain is Mitochondrial holo-[acyl-carrier-protein] synthase (152 aa).

It belongs to the P-Pant transferase superfamily. AcpS family.

The protein resides in the mitochondrion. It carries out the reaction apo-[ACP] + CoA = holo-[ACP] + adenosine 3',5'-bisphosphate + H(+). Functionally, transfers the 4'-phosphopantetheine moiety from coenzyme A to a Ser of mitochondrial acyl-carrier-protein. The protein is Mitochondrial holo-[acyl-carrier-protein] synthase (PPT2) of Candida glabrata (strain ATCC 2001 / BCRC 20586 / JCM 3761 / NBRC 0622 / NRRL Y-65 / CBS 138) (Yeast).